A 620-amino-acid polypeptide reads, in one-letter code: LEAF RUST 10 DISEASE-RESISTANCE LOCUS RECEPTOR-LIKE PROTEIN KINASE-like 2.3 (620 aa).

The first 30 residues, Met-1–Ser-30, serve as a signal peptide directing secretion. Residues Gln-31–Pro-256 lie on the Extracellular side of the membrane. 9 N-linked (GlcNAc...) asparagine glycosylation sites follow: Asn-75, Asn-85, Asn-93, Asn-132, Asn-148, Asn-162, Asn-189, Asn-231, and Asn-248. Residues Phe-257–Leu-277 form a helical membrane-spanning segment. Residues Ala-278 to Val-620 lie on the Cytoplasmic side of the membrane. A Protein kinase domain is found at Lys-314–Leu-596. ATP contacts are provided by residues Val-320–Val-328 and Lys-342. Asp-431 serves as the catalytic Proton acceptor. A disordered region spans residues Asp-586 to Val-620. A compositionally biased stretch (polar residues) spans Met-600–Val-620.

It belongs to the protein kinase superfamily. Ser/Thr protein kinase family.

The protein localises to the membrane. It carries out the reaction L-seryl-[protein] + ATP = O-phospho-L-seryl-[protein] + ADP + H(+). It catalyses the reaction L-threonyl-[protein] + ATP = O-phospho-L-threonyl-[protein] + ADP + H(+). The chain is LEAF RUST 10 DISEASE-RESISTANCE LOCUS RECEPTOR-LIKE PROTEIN KINASE-like 2.3 from Arabidopsis thaliana (Mouse-ear cress).